The sequence spans 557 residues: Formate--tetrahydrofolate ligase (557 aa).

An ATP-binding site is contributed by 66-73 (TPAGEGKS).

This sequence belongs to the formate--tetrahydrofolate ligase family.

The catalysed reaction is (6S)-5,6,7,8-tetrahydrofolate + formate + ATP = (6R)-10-formyltetrahydrofolate + ADP + phosphate. It participates in one-carbon metabolism; tetrahydrofolate interconversion. This is Formate--tetrahydrofolate ligase from Clostridium botulinum (strain 657 / Type Ba4).